The primary structure comprises 163 residues: Transmembrane protein 278 (163 aa).

The interval 1-37 (MSEQGRETEEEEGGGGASDTAPMLPRGPPDHQASALT) is disordered. 2 helical membrane-spanning segments follow: residues 51-71 (LLAGLLLHLLLPAAAFLLVLL) and 105-125 (AALIVFGLLSLPPLLVLASAV). A compositionally biased stretch (pro residues) spans 136 to 148 (LLPPPAGTPGPRR). A disordered region spans residues 136–156 (LLPPPAGTPGPRRPPGRPDED).

Belongs to the TMEM88 family.

It is found in the membrane. In Homo sapiens (Human), this protein is Transmembrane protein 278.